A 313-amino-acid polypeptide reads, in one-letter code: Aspartate carbamoyltransferase catalytic subunit (313 aa).

Positions 58 and 59 each coordinate carbamoyl phosphate. Residue lysine 86 coordinates L-aspartate. The carbamoyl phosphate site is built by arginine 108, histidine 136, and glutamine 139. Arginine 169 and arginine 223 together coordinate L-aspartate. 2 residues coordinate carbamoyl phosphate: glycine 264 and proline 265.

The protein belongs to the aspartate/ornithine carbamoyltransferase superfamily. ATCase family. In terms of assembly, heterododecamer (2C3:3R2) of six catalytic PyrB chains organized as two trimers (C3), and six regulatory PyrI chains organized as three dimers (R2).

It catalyses the reaction carbamoyl phosphate + L-aspartate = N-carbamoyl-L-aspartate + phosphate + H(+). It participates in pyrimidine metabolism; UMP biosynthesis via de novo pathway; (S)-dihydroorotate from bicarbonate: step 2/3. Catalyzes the condensation of carbamoyl phosphate and aspartate to form carbamoyl aspartate and inorganic phosphate, the committed step in the de novo pyrimidine nucleotide biosynthesis pathway. The sequence is that of Aspartate carbamoyltransferase catalytic subunit from Halothermothrix orenii (strain H 168 / OCM 544 / DSM 9562).